The primary structure comprises 147 residues: Hemoglobin subunit gamma-1 (147 aa).

A Globin domain is found at 3 to 147 (NFTAEDKAAI…VASALGSRYH (145 aa)). A Phosphothreonine modification is found at T13. S45, S51, and S53 each carry phosphoserine. K60 carries the N6-acetyllysine modification. Heme b is bound at residue H64. Position 83 is an N6-acetyllysine (K83). H93 is a heme b binding site. S-nitrosocysteine is present on C94. Residue S140 is modified to Phosphoserine.

Belongs to the globin family. In terms of assembly, heterotetramer of two alpha chains and two gamma chains in fetal hemoglobin (Hb F). Red blood cells.

Gamma chains make up the fetal hemoglobin F, in combination with alpha chains. The polypeptide is Hemoglobin subunit gamma-1 (HBG1) (Plecturocebus moloch (Dusky titi monkey)).